A 297-amino-acid polypeptide reads, in one-letter code: tRNA dimethylallyltransferase (297 aa).

Position 10–17 (10–17 (APTGAGKT)) interacts with ATP. 12–17 (TGAGKT) serves as a coordination point for substrate. The interval 34 to 37 (DSRQ) is interaction with substrate tRNA.

Belongs to the IPP transferase family. Monomer. Mg(2+) is required as a cofactor.

The enzyme catalyses adenosine(37) in tRNA + dimethylallyl diphosphate = N(6)-dimethylallyladenosine(37) in tRNA + diphosphate. Its function is as follows. Catalyzes the transfer of a dimethylallyl group onto the adenine at position 37 in tRNAs that read codons beginning with uridine, leading to the formation of N6-(dimethylallyl)adenosine (i(6)A). This is tRNA dimethylallyltransferase from Leptospira interrogans serogroup Icterohaemorrhagiae serovar Lai (strain 56601).